The primary structure comprises 187 residues: Large ribosomal subunit protein uL22A (187 aa).

It belongs to the universal ribosomal protein uL22 family. As to quaternary structure, component of the large ribosomal subunit (LSU). Mature yeast ribosomes consist of a small (40S) and a large (60S) subunit. The 40S small subunit contains 1 molecule of ribosomal RNA (18S rRNA) and at least 33 different proteins. The large 60S subunit contains 3 rRNA molecules (25S, 5.8S and 5S rRNA) and at least 46 different proteins. uL22 is associated with the polypeptide exit tunnel.

It is found in the cytoplasm. In terms of biological role, component of the ribosome, a large ribonucleoprotein complex responsible for the synthesis of proteins in the cell. The small ribosomal subunit (SSU) binds messenger RNAs (mRNAs) and translates the encoded message by selecting cognate aminoacyl-transfer RNA (tRNA) molecules. The large subunit (LSU) contains the ribosomal catalytic site termed the peptidyl transferase center (PTC), which catalyzes the formation of peptide bonds, thereby polymerizing the amino acids delivered by tRNAs into a polypeptide chain. The nascent polypeptides leave the ribosome through a tunnel in the LSU and interact with protein factors that function in enzymatic processing, targeting, and the membrane insertion of nascent chains at the exit of the ribosomal tunnel. This Schizosaccharomyces pombe (strain 972 / ATCC 24843) (Fission yeast) protein is Large ribosomal subunit protein uL22A (rpl1701).